A 484-amino-acid polypeptide reads, in one-letter code: Protein phosphatase 1B (484 aa).

Residues 1–14 (MGAFLDKPKTEKHN) are compositionally biased toward basic and acidic residues. The disordered stretch occupies residues 1-20 (MGAFLDKPKTEKHNAHGAGN). Gly-2 carries the N-myristoyl glycine lipid modification. Lys-12 participates in a covalent cross-link: Glycyl lysine isopeptide (Lys-Gly) (interchain with G-Cter in ISG15). The PPM-type phosphatase domain occupies 23-295 (RYGLSSMQGW…DNMSIVLVCF (273 aa)). Positions 60 and 61 each coordinate Mn(2+). A Glycyl lysine isopeptide (Lys-Gly) (interchain with G-Cter in ISG15) cross-link involves residue Lys-142. Positions 243 and 286 each coordinate Mn(2+). Residue Ser-391 is modified to Phosphoserine. The segment at 431–484 (EENPAEQAATAASSNSDAGNTVAMQESHTESKSDLAELDSCTEDAGTKMSGEKL) is disordered. The segment covering 440 to 456 (TAASSNSDAGNTVAMQE) has biased composition (polar residues).

It belongs to the PP2C family. Monomer. Interacts with PAK6. Interacts with the phosphorylated form of IKBKB/IKKB. It depends on Mg(2+) as a cofactor. The cofactor is Mn(2+). Isgylation negatively regulates its activity. In terms of processing, N-myristoylation is essential for the recognition of its substrates for dephosphorylation.

The protein localises to the cytoplasm. Its subcellular location is the cytosol. The protein resides in the membrane. It catalyses the reaction O-phospho-L-seryl-[protein] + H2O = L-seryl-[protein] + phosphate. The enzyme catalyses O-phospho-L-threonyl-[protein] + H2O = L-threonyl-[protein] + phosphate. Its function is as follows. Enzyme with a broad specificity. Dephosphorylates PRKAA1 and PRKAA2. Inhibits TBK1-mediated antiviral signaling by dephosphorylating it at 'Ser-172'. Plays an important role in the termination of TNF-alpha-mediated NF-kappa-B activation through dephosphorylating and inactivating IKBKB/IKKB. In Bos taurus (Bovine), this protein is Protein phosphatase 1B (PPM1B).